The sequence spans 158 residues: Tryptophan-rich protein TspO (158 aa).

Helical transmembrane passes span 5–25 (ILTL…GSTF), 48–68 (LFPP…AKVL), 79–99 (VGVV…ASFF), 105–125 (LAGL…MLAF), and 134–154 (LLLV…FTIL).

It belongs to the TspO/BZRP family.

It localises to the membrane. The protein localises to the cell membrane. Binds tetrapyrroles and promotes the photooxidative degradation of protoporphyrin IX. Can bind the benzodiazepine receptor agonist PK-11195 (in vitro); this interferes with photooxidative tetrapyrrole degradation. May play a role in the transmembrane transport of tetrapyrroles and similar compounds. The polypeptide is Tryptophan-rich protein TspO (Chlorobaculum tepidum (strain ATCC 49652 / DSM 12025 / NBRC 103806 / TLS) (Chlorobium tepidum)).